Here is a 122-residue protein sequence, read N- to C-terminus: Large ribosomal subunit protein uL14 (122 aa).

It belongs to the universal ribosomal protein uL14 family. As to quaternary structure, part of the 50S ribosomal subunit. Forms a cluster with proteins L3 and L19. In the 70S ribosome, L14 and L19 interact and together make contacts with the 16S rRNA in bridges B5 and B8.

Binds to 23S rRNA. Forms part of two intersubunit bridges in the 70S ribosome. The chain is Large ribosomal subunit protein uL14 from Streptomyces coelicolor (strain ATCC BAA-471 / A3(2) / M145).